A 314-amino-acid chain; its full sequence is Testis-specific Y-encoded protein 4 (314 aa).

This sequence belongs to the nucleosome assembly protein (NAP) family.

The protein localises to the cytoplasm. It is found in the nucleus. In terms of biological role, may be involved in sperm differentiation and proliferation. This is Testis-specific Y-encoded protein 4 (TSPY4) from Homo sapiens (Human).